A 283-amino-acid polypeptide reads, in one-letter code: Probable endonuclease 4 (283 aa).

Residues histidine 69, histidine 109, glutamate 145, aspartate 179, histidine 182, histidine 216, aspartate 229, histidine 231, and glutamate 261 each contribute to the Zn(2+) site.

This sequence belongs to the AP endonuclease 2 family. It depends on Zn(2+) as a cofactor.

The catalysed reaction is Endonucleolytic cleavage to 5'-phosphooligonucleotide end-products.. Functionally, endonuclease IV plays a role in DNA repair. It cleaves phosphodiester bonds at apurinic or apyrimidinic (AP) sites, generating a 3'-hydroxyl group and a 5'-terminal sugar phosphate. The sequence is that of Probable endonuclease 4 from Campylobacter curvus (strain 525.92).